Reading from the N-terminus, the 284-residue chain is Nucleotide-binding protein SPO0713 (284 aa).

ATP is bound at residue 3-10; that stretch reads GPSGAGRS. A GTP-binding site is contributed by 50-53; the sequence is DARN.

It belongs to the RapZ-like family.

Its function is as follows. Displays ATPase and GTPase activities. This chain is Nucleotide-binding protein SPO0713, found in Ruegeria pomeroyi (strain ATCC 700808 / DSM 15171 / DSS-3) (Silicibacter pomeroyi).